The following is a 45-amino-acid chain: Enterotoxin (45 aa).

In terms of assembly, one of 3 components (of 35, 45 and 105 kDa) of the enterotoxin.

Functionally, one of 3 components required for cytotoxicity (tested in African green monkey Vero cells); the complex is not hemolytic. In Bacillus cereus, this protein is Enterotoxin.